The following is a 696-amino-acid chain: Polyribonucleotide nucleotidyltransferase (696 aa).

2 residues coordinate Mg(2+): Asp-489 and Asp-495. In terms of domain architecture, KH spans Pro-556–Ile-615. The 69-residue stretch at Gly-625 to Lys-693 folds into the S1 motif domain.

Belongs to the polyribonucleotide nucleotidyltransferase family. In terms of assembly, component of the RNA degradosome, which is a multiprotein complex involved in RNA processing and mRNA degradation. Mg(2+) is required as a cofactor.

Its subcellular location is the cytoplasm. It catalyses the reaction RNA(n+1) + phosphate = RNA(n) + a ribonucleoside 5'-diphosphate. Functionally, involved in mRNA degradation. Catalyzes the phosphorolysis of single-stranded polyribonucleotides processively in the 3'- to 5'-direction. This is Polyribonucleotide nucleotidyltransferase from Coxiella burnetii (strain CbuG_Q212) (Coxiella burnetii (strain Q212)).